The following is a 216-amino-acid chain: MPMNEPVDLQPSPSLLPMSRRFRGYLPVVVDVETGGFDWNKHALLEIACVPIEMDAQGHFFPGETASAHLVPAPGLEIDPKSLEITGIVLDHPFRFAKQEKDALDHVFAPVRAAVKKYGCQRAILVGHNAHFDLNFLNAAVARVGHKRNPFHPFSVFDTVTLAGVAYGQTVLARAAQAAGLDWNSADAHSAVYDTEQTARLFCKIANAWPGPASAG.

An Exonuclease domain is found at 28 to 202; sequence VVVDVETGGF…YDTEQTARLF (175 aa). The Mg(2+) site is built by aspartate 31, glutamate 33, histidine 189, and aspartate 194. Histidine 189 functions as the Proton donor/acceptor in the catalytic mechanism.

Belongs to the RNase T family. Homodimer. It depends on Mg(2+) as a cofactor.

Its function is as follows. Trims short 3' overhangs of a variety of RNA species, leaving a one or two nucleotide 3' overhang. Responsible for the end-turnover of tRNA: specifically removes the terminal AMP residue from uncharged tRNA (tRNA-C-C-A). Also appears to be involved in tRNA biosynthesis. The chain is Ribonuclease T from Xanthomonas campestris pv. campestris (strain 8004).